An 81-amino-acid polypeptide reads, in one-letter code: DNA-directed RNA polymerase subunit Rpo6 (81 aa).

The protein belongs to the archaeal Rpo6/eukaryotic RPB6 RNA polymerase subunit family. In terms of assembly, part of the RNA polymerase complex.

It localises to the cytoplasm. It catalyses the reaction RNA(n) + a ribonucleoside 5'-triphosphate = RNA(n+1) + diphosphate. DNA-dependent RNA polymerase (RNAP) catalyzes the transcription of DNA into RNA using the four ribonucleoside triphosphates as substrates. This is DNA-directed RNA polymerase subunit Rpo6 from Thermofilum pendens (strain DSM 2475 / Hrk 5).